A 333-amino-acid polypeptide reads, in one-letter code: uncharacterized protein (333 aa).

This is an uncharacterized protein from Gallus gallus (Chicken).